A 427-amino-acid chain; its full sequence is Glutamate-1-semialdehyde 2,1-aminomutase (427 aa).

Lys-265 is modified (N6-(pyridoxal phosphate)lysine).

This sequence belongs to the class-III pyridoxal-phosphate-dependent aminotransferase family. HemL subfamily. In terms of assembly, homodimer. It depends on pyridoxal 5'-phosphate as a cofactor.

It localises to the cytoplasm. The enzyme catalyses (S)-4-amino-5-oxopentanoate = 5-aminolevulinate. The protein operates within porphyrin-containing compound metabolism; protoporphyrin-IX biosynthesis; 5-aminolevulinate from L-glutamyl-tRNA(Glu): step 2/2. This Bordetella bronchiseptica (strain ATCC BAA-588 / NCTC 13252 / RB50) (Alcaligenes bronchisepticus) protein is Glutamate-1-semialdehyde 2,1-aminomutase.